The following is a 494-amino-acid chain: NADPH:adrenodoxin oxidoreductase, mitochondrial (494 aa).

Residues 1–34 (MAPRCWRWWSWSAWPGVRPLPSRSTPTPGFCKKF) constitute a mitochondrion transit peptide. Residues A51, E72, L80, and V116 each contribute to the FAD site. Residues 187–190 (QGNV), 231–232 (RR), and E243 contribute to the NADP(+) site. S313 is modified (phosphoserine). FAD-binding positions include W401 and 408–410 (GVI). G408 contacts NADP(+).

It belongs to the ferredoxin--NADP reductase type 1 family. In terms of assembly, monomer. Interacts directly with FDX1. It depends on FAD as a cofactor.

Its subcellular location is the mitochondrion inner membrane. The catalysed reaction is 2 reduced [adrenodoxin] + NADP(+) + H(+) = 2 oxidized [adrenodoxin] + NADPH. The enzyme catalyses 2 reduced [2Fe-2S]-[ferredoxin] + NADP(+) + H(+) = 2 oxidized [2Fe-2S]-[ferredoxin] + NADPH. It functions in the pathway steroid metabolism; cholesterol metabolism. Functionally, serves as the first electron transfer protein in all the mitochondrial P450 systems including cholesterol side chain cleavage in all steroidogenic tissues, steroid 11-beta hydroxylation in the adrenal cortex, 25-OH-vitamin D3-24 hydroxylation in the kidney, and sterol C-27 hydroxylation in the liver. Also acts as a ferredoxin--NADP(+) reductase essential for coenzyme Q biosynthesis: together with FDX2, transfers the electrons required for the hydroxylation reaction performed by COQ6. This is NADPH:adrenodoxin oxidoreductase, mitochondrial (Fdxr) from Rattus norvegicus (Rat).